The chain runs to 314 residues: Lipoyl synthase (314 aa).

[4Fe-4S] cluster contacts are provided by Cys-61, Cys-66, Cys-72, Cys-87, Cys-91, Cys-94, and Ser-301. The 218-residue stretch at 73–290 (FGRGTATFMI…EEEAKKMGFS (218 aa)) folds into the Radical SAM core domain.

This sequence belongs to the radical SAM superfamily. Lipoyl synthase family. [4Fe-4S] cluster serves as cofactor.

It localises to the cytoplasm. It catalyses the reaction [[Fe-S] cluster scaffold protein carrying a second [4Fe-4S](2+) cluster] + N(6)-octanoyl-L-lysyl-[protein] + 2 oxidized [2Fe-2S]-[ferredoxin] + 2 S-adenosyl-L-methionine + 4 H(+) = [[Fe-S] cluster scaffold protein] + N(6)-[(R)-dihydrolipoyl]-L-lysyl-[protein] + 4 Fe(3+) + 2 hydrogen sulfide + 2 5'-deoxyadenosine + 2 L-methionine + 2 reduced [2Fe-2S]-[ferredoxin]. The protein operates within protein modification; protein lipoylation via endogenous pathway; protein N(6)-(lipoyl)lysine from octanoyl-[acyl-carrier-protein]: step 2/2. In terms of biological role, catalyzes the radical-mediated insertion of two sulfur atoms into the C-6 and C-8 positions of the octanoyl moiety bound to the lipoyl domains of lipoate-dependent enzymes, thereby converting the octanoylated domains into lipoylated derivatives. This chain is Lipoyl synthase, found in Dechloromonas aromatica (strain RCB).